Reading from the N-terminus, the 411-residue chain is Adenylosuccinate synthetase (411 aa).

GTP is bound by residues 11–17 (GDEGKGK) and 39–41 (GHT). Asp12 acts as the Proton acceptor in catalysis. Asp12 and Gly39 together coordinate Mg(2+). IMP-binding positions include 12–15 (DEGK), 37–40 (NAGH), Thr121, Arg135, Gln215, Thr230, and Arg294. His40 functions as the Proton donor in the catalytic mechanism. Position 290–296 (290–296 (TTTKRPR)) interacts with substrate. Residues Arg296, 322–324 (KLD), and 400–402 (STS) each bind GTP.

It belongs to the adenylosuccinate synthetase family. Homodimer. Requires Mg(2+) as cofactor.

It localises to the cytoplasm. It carries out the reaction IMP + L-aspartate + GTP = N(6)-(1,2-dicarboxyethyl)-AMP + GDP + phosphate + 2 H(+). It functions in the pathway purine metabolism; AMP biosynthesis via de novo pathway; AMP from IMP: step 1/2. Its function is as follows. Plays an important role in the de novo pathway of purine nucleotide biosynthesis. Catalyzes the first committed step in the biosynthesis of AMP from IMP. This chain is Adenylosuccinate synthetase, found in Helicobacter pylori (strain HPAG1).